The chain runs to 502 residues: Zinc finger protein 488 (502 aa).

One can recognise an SET domain in the interval 8–130 (RSLWTNDSKI…EGEELLVWYD (123 aa)). Tyr-129 provides a ligand contact to S-adenosyl-L-methionine. The C2H2-type 1; atypical zinc finger occupies 151–174 (YTCTRCGQAFKNENPFLAHCRFLC). Disordered regions lie at residues 267–303 (SEPTDNAQTNESKISKNSAFTEVRKAPEPSNPEKSSR) and 338–361 (PSKRALAEAQNPSPPDTDNSLDSF). Over residues 269–286 (PTDNAQTNESKISKNSAF) the composition is skewed to polar residues. 2 C2H2-type zinc fingers span residues 438 to 460 (NWCAKCNLSFRMTSDLVFHMRSH) and 479 to 501 (LTCPICHEYFRERHHLSRHMTSH).

This sequence belongs to the krueppel C2H2-type zinc-finger protein family. In terms of tissue distribution, expressed in pMN progenitors and oligodendrocyte lineage cells in the embryo with expression declining in oligodendrocytes undergoing differentiation.

It localises to the nucleus. Functionally, transcriptional repressor. May have histone methyltransferase activity. Negatively regulates shh signaling activity in pMN progenitor cells which prevents their switch from motor neuron to oligodendrocyte precursor cell production. Independently of shh activity, also regulates oligodendrocyte formation. The sequence is that of Zinc finger protein 488 from Danio rerio (Zebrafish).